A 587-amino-acid chain; its full sequence is Phosphatidylinositol-3-phosphatase SAC1 (587 aa).

The Cytoplasmic segment spans residues Met-1–Lys-520. The region spanning Leu-122–Gly-451 is the SAC domain. Positions Thr-452–Asp-587 are essential for phosphatidylinositol-4-phosphate phosphatase activity. N6-acetyllysine is present on Lys-456. The chain crosses the membrane as a helical span at residues Phe-521–Met-541. The Lumenal portion of the chain corresponds to Ala-542–Glu-548. The chain crosses the membrane as a helical span at residues Thr-549–Tyr-569. Over Asn-570–Asp-587 the chain is Cytoplasmic.

As to quaternary structure, interacts with TMEM39A. Interacts with SEC23A and SEC24A; this interaction is reduced in the absence of TMEM39A. Interacts with PLEKHA3 and VAPA and/or VAPB to form a ternary complex. Detected in spleen, lung, liver, skeletal muscle, kidney, testis and in cerebellar Purkinje cells (at protein level). Ubiquitous. Highly expressed in brain, spleen, liver and kidney.

The protein localises to the endoplasmic reticulum membrane. It localises to the golgi apparatus membrane. The catalysed reaction is a 1,2-diacyl-sn-glycero-3-phospho-(1D-myo-inositol-3-phosphate) + H2O = a 1,2-diacyl-sn-glycero-3-phospho-(1D-myo-inositol) + phosphate. The enzyme catalyses a 1,2-diacyl-sn-glycero-3-phospho-(1D-myo-inositol 4-phosphate) + H2O = a 1,2-diacyl-sn-glycero-3-phospho-(1D-myo-inositol) + phosphate. Functionally, phosphoinositide phosphatase which catalyzes the hydrolysis of phosphatidylinositol 4-phosphate (PtdIns(4)P), phosphatidylinositol 3-phosphate (PtdIns(3)P) and has low activity towards phosphatidylinositol-3,5-bisphosphate (PtdIns(3,5)P2). Shows a very robust PtdIns(4)P phosphatase activity when it binds PtdIns(4)P in a 'cis' configuration in the cellular environment, with much less activity seen when it binds PtdIns(4)P in 'trans' configuration. PtdIns(4)P phosphatase activity (when it binds PtdIns(4)P in 'trans' configuration) is enhanced in the presence of PLEKHA3. The sequence is that of Phosphatidylinositol-3-phosphatase SAC1 (Sacm1l) from Rattus norvegicus (Rat).